Here is a 256-residue protein sequence, read N- to C-terminus: 5-keto-4-deoxy-D-glucarate aldolase (256 aa).

The active-site Proton acceptor is His50. Gln151 is a substrate binding site. Glu153 serves as a coordination point for Mg(2+). Positions 178 and 179 each coordinate substrate. Residue Asp179 participates in Mg(2+) binding.

It belongs to the HpcH/HpaI aldolase family. KDGluc aldolase subfamily. As to quaternary structure, homohexamer; trimer of dimers. The cofactor is Mg(2+).

The enzyme catalyses 5-dehydro-4-deoxy-D-glucarate = 2-hydroxy-3-oxopropanoate + pyruvate. It carries out the reaction 2-dehydro-3-deoxy-D-glucarate = 2-hydroxy-3-oxopropanoate + pyruvate. It participates in carbohydrate acid metabolism; galactarate degradation; D-glycerate from galactarate: step 2/3. Its function is as follows. Catalyzes the reversible retro-aldol cleavage of both 5-keto-4-deoxy-D-glucarate and 2-keto-3-deoxy-D-glucarate to pyruvate and tartronic semialdehyde. This is 5-keto-4-deoxy-D-glucarate aldolase from Salmonella agona (strain SL483).